The chain runs to 192 residues: Probable apo-citrate lyase phosphoribosyl-dephospho-CoA transferase (192 aa).

It belongs to the CitX family.

It catalyses the reaction apo-[citrate lyase ACP] + 2'-(5''-triphospho-alpha-D-ribosyl)-3'-dephospho-CoA = holo-[citrate lyase ACP] + diphosphate. Functionally, transfers 2-(5''-triphosphoribosyl)-3'-dephosphocoenzyme-A on a serine residue to the apo-acyl carrier protein (gamma chain) of the citrate lyase to yield holo-acyl carrier protein. This chain is Probable apo-citrate lyase phosphoribosyl-dephospho-CoA transferase, found in Streptococcus pyogenes serotype M18 (strain MGAS8232).